A 574-amino-acid chain; its full sequence is MSVQENTLPQQLWPWIFRSQKDLAKSALSGAPGGPAGYLRRASVAQLTQELGTAFFQQQQLPAAMADTFLEHLCLLDIDSQPVAARSTSIIATIGPASRSVDRLKEMIKAGMNIARLNFSHGSHEYHAESIANIREATESFATSPLSYRPVAIALDTKGPEIRTGVLQGGPESEVEIVKGSQVLVTVDPKFQTRGDAKTVWVDYHNITRVVAVGGRIYIDDGLISLVVQKIGPEGLVTEVEHGGILGSRKGVNLPNTEVDLPGLSEQDLLDLRFGVQHNVDIIFASFVRKASDVLAVRDALGPEGQNIKIISKIENHEGVKKFDEILEVSDGIMVARGDLGIEIPAEKVFLAQKMMIGRCNLAGKPVVCATQMLESMITKARPTRAETSDVANAVLDGADCIMLSGETAKGSFPVEAVMMQHAIAREAEAAVYHRQLFEELRRAAPLSRDPTEVTAIGAVEASFKCCAAAIIVLTKTGRSAQLLSQYRPRAAVIAVTRSAQAARQVHLSRGVFPLLYREPPEAIWADDVDRRVQFGIESGKLRGFLRVGDLVIVVTGWRPGSGYTNIMRVLSVS.

S2, S19, S26, and S43 each carry phosphoserine. R116 contributes to the substrate binding site. N118, S120, D156, and T157 together coordinate K(+). 118-121 (NFSH) contributes to the ATP binding site. Residues R163 and K250 each contribute to the ATP site. A Phosphoserine modification is found at S292. K313 contributes to the substrate binding site. E315 lines the Mn(2+) pocket. Positions 338, 339, and 371 each coordinate substrate. Residue D339 participates in Mn(2+) binding. Residues 475–480 (TKTGRS), W525, R532, and 559–564 (RPGSGY) each bind beta-D-fructose 1,6-bisphosphate.

The protein belongs to the pyruvate kinase family. As to quaternary structure, homotetramer. Mg(2+) is required as a cofactor. It depends on Mn(2+) as a cofactor. K(+) serves as cofactor.

The enzyme catalyses pyruvate + ATP = phosphoenolpyruvate + ADP + H(+). The protein operates within carbohydrate degradation; glycolysis; pyruvate from D-glyceraldehyde 3-phosphate: step 5/5. Allosterically activated by fructose 1,6-bisphosphate. In terms of biological role, pyruvate kinase that catalyzes the conversion of phosphoenolpyruvate to pyruvate with the synthesis of ATP, and which plays a key role in glycolysis. This Rattus norvegicus (Rat) protein is Pyruvate kinase PKLR (Pklr).